The chain runs to 143 residues: 3-hydroxyacyl-[acyl-carrier-protein] dehydratase FabZ (143 aa).

H47 is a catalytic residue.

It belongs to the thioester dehydratase family. FabZ subfamily.

Its subcellular location is the cytoplasm. It carries out the reaction a (3R)-hydroxyacyl-[ACP] = a (2E)-enoyl-[ACP] + H2O. Its function is as follows. Involved in unsaturated fatty acids biosynthesis. Catalyzes the dehydration of short chain beta-hydroxyacyl-ACPs and long chain saturated and unsaturated beta-hydroxyacyl-ACPs. This chain is 3-hydroxyacyl-[acyl-carrier-protein] dehydratase FabZ, found in Moorella thermoacetica (strain ATCC 39073 / JCM 9320).